The following is a 351-amino-acid chain: Ceramide hydroxylase (351 aa).

The next 4 membrane-spanning stretches (helical) occupy residues 26–46 (AAIYWADLTISAAVMWGGFLI), 47–67 (AATTSSLALGLGAALLSMLAL), 141–161 (GFLFIALLAPLGVILRSAILI), and 204–224 (VACWLWSWAVIAGLGLGVVPV).

Belongs to the fatty acid desaturase type 1 family.

The protein localises to the cell inner membrane. It functions in the pathway lipid metabolism; sphingolipid metabolism. In terms of biological role, involved in de novo bacterial ceramide synthesis. This is Ceramide hydroxylase from Caulobacter vibrioides (strain NA1000 / CB15N) (Caulobacter crescentus).